A 92-amino-acid polypeptide reads, in one-letter code: UPF0250 protein XCC3453 (92 aa).

Belongs to the UPF0250 family.

The sequence is that of UPF0250 protein XCC3453 from Xanthomonas campestris pv. campestris (strain ATCC 33913 / DSM 3586 / NCPPB 528 / LMG 568 / P 25).